A 339-amino-acid polypeptide reads, in one-letter code: Protein pelota homolog (339 aa).

This sequence belongs to the eukaryotic release factor 1 family. Pelota subfamily. As to quaternary structure, monomer. A divalent metal cation serves as cofactor.

It is found in the cytoplasm. Functionally, may function in recognizing stalled ribosomes, interact with stem-loop structures in stalled mRNA molecules, and effect endonucleolytic cleavage of the mRNA. May play a role in the release non-functional ribosomes and degradation of damaged mRNAs. Has endoribonuclease activity. This is Protein pelota homolog (pelA) from Thermoplasma acidophilum (strain ATCC 25905 / DSM 1728 / JCM 9062 / NBRC 15155 / AMRC-C165).